A 377-amino-acid chain; its full sequence is Homoserine O-acetyltransferase (377 aa).

Residues 47 to 355 enclose the AB hydrolase-1 domain; it reads NAILICHALT…DYGHDAFLLE (309 aa). Catalysis depends on serine 153, which acts as the Nucleophile. Position 222 (arginine 222) interacts with substrate. Residues aspartate 316 and histidine 349 contribute to the active site. Aspartate 350 contributes to the substrate binding site.

Belongs to the AB hydrolase superfamily. MetX family. As to quaternary structure, homodimer.

It localises to the cytoplasm. It catalyses the reaction L-homoserine + acetyl-CoA = O-acetyl-L-homoserine + CoA. It functions in the pathway amino-acid biosynthesis; L-methionine biosynthesis via de novo pathway; O-acetyl-L-homoserine from L-homoserine: step 1/1. Its function is as follows. Transfers an acetyl group from acetyl-CoA to L-homoserine, forming acetyl-L-homoserine. The sequence is that of Homoserine O-acetyltransferase from Deferribacter desulfuricans (strain DSM 14783 / JCM 11476 / NBRC 101012 / SSM1).